The primary structure comprises 438 residues: MRVLLVGGGGREHAIGEALARGGAELYVVSKHKNPGLARISRDYGISKETDVEKVVRFARMWNVDLAFIGPEAPLEAGIVNALEREGIPTVGPTKEAARLETNKAWAREFMERNDIPGRKLFKVFDDVEEMKAWIDEYGKPVVVKPLGLTGGKGVKVVGYQLKDNEEAKEYAEYLIKKDGKVLIEERTDGVEFTFQVFSDGRNVIPMPLVQDYPHAYEGDVGPITGGMGSYSCSNHILPFITKEDWKMALRTLEETIKAMRKEGYPYKGILYGQFMLSREGPVIIEYNARFGDPEAINVLSILEDNLVEIAEGIVKGRVRGAKFQEKATVVKYLAPKGYPENPIRGAEIMVNEEAIKEEGAKIVYASVDENMKLLGSRALAMVGVADTLEEAEKIAEAGIRHVRGPVFYRKDVGTKESIEKRIRTMKELGKEFEPNSC.

In terms of domain architecture, ATP-grasp spans 108–316 (REFMERNDIP…LVEIAEGIVK (209 aa)). 135–194 (IDEYGKPVVVKPLGLTGGKGVKVVGYQLKDNEEAKEYAEYLIKKDGKVLIEERTDGVEFT) contacts ATP. 3 residues coordinate Mg(2+): Gln-274, Glu-286, and Asn-288. 3 residues coordinate Mn(2+): Gln-274, Glu-286, and Asn-288.

The protein belongs to the GARS family. Mg(2+) serves as cofactor. Mn(2+) is required as a cofactor.

It carries out the reaction 5-phospho-beta-D-ribosylamine + glycine + ATP = N(1)-(5-phospho-beta-D-ribosyl)glycinamide + ADP + phosphate + H(+). It functions in the pathway purine metabolism; IMP biosynthesis via de novo pathway; N(1)-(5-phospho-D-ribosyl)glycinamide from 5-phospho-alpha-D-ribose 1-diphosphate: step 2/2. The chain is Phosphoribosylamine--glycine ligase from Pyrococcus abyssi (strain GE5 / Orsay).